The primary structure comprises 426 residues: MPSIDVVVAREILDSRGNPTVEVEVGLDDGSTGRAAVPSGASTGAFEAIELRDGDPSRYLGKGVEKAVLAVIEQIGPELVGYDATEQRLIDQAMFDLDATDNKGSLGANAILGVSLAVAHAASEASDLPLFRYLGGPNAHLLPVPMMNILNGGSHADSNVDIQEFMIAPIGAESFSEALRWGAEVYHTLKKVLKNKGLATGLGDEGGFAPNLGSNREALDLILEAIKEAGYTPGEQIALALDVAASEFYKDGSYAFEGKNRSAAEMTEYYAELVEAYPLVSIEDPLFEDDWDGWNTITAKLGDKVQLVGDDLFVTNPERLARGIEENSANALLVKVNQIGSLTETLDAVELAQRNGFKCMMSHRSGETEDVTIADLAVATNCGQIKTGAPARSERVAKYNQLLRIEEILDDAAVYAGRSAFPRFKG.

Gln-163 provides a ligand contact to (2R)-2-phosphoglycerate. Glu-205 (proton donor) is an active-site residue. Mg(2+) contacts are provided by Asp-242, Glu-283, and Asp-310. Residues Lys-335, Arg-364, Ser-365, and Lys-386 each coordinate (2R)-2-phosphoglycerate. Catalysis depends on Lys-335, which acts as the Proton acceptor.

Belongs to the enolase family. The cofactor is Mg(2+).

Its subcellular location is the cytoplasm. The protein localises to the secreted. It localises to the cell surface. The enzyme catalyses (2R)-2-phosphoglycerate = phosphoenolpyruvate + H2O. It participates in carbohydrate degradation; glycolysis; pyruvate from D-glyceraldehyde 3-phosphate: step 4/5. In terms of biological role, catalyzes the reversible conversion of 2-phosphoglycerate (2-PG) into phosphoenolpyruvate (PEP). It is essential for the degradation of carbohydrates via glycolysis. This chain is Enolase 1, found in Streptomyces coelicolor (strain ATCC BAA-471 / A3(2) / M145).